The following is a 346-amino-acid chain: Melatonin receptor type 1C (346 aa).

Residues 1-26 (MERPGSNGSCSGCRLEGGPAARAASG) are Extracellular-facing. Residue Asn-7 is glycosylated (N-linked (GlcNAc...) asparagine). The chain crosses the membrane as a helical span at residues 27 to 47 (LAAVLIVTIVVDVLGNALVIL). Residues 48–60 (SVLRNKKLRNAGN) are Cytoplasmic-facing. The chain crosses the membrane as a helical span at residues 61 to 81 (IFVVSLSVADLVVAVYPYPLI). Residues 82–99 (LSAIFHNGWTMGNIHCQI) are Extracellular-facing. A disulfide bond links Cys-97 and Cys-174. A helical transmembrane segment spans residues 100–120 (SGFLMGLSVIGSIFNITAIAI). The Cytoplasmic segment spans residues 121 to 139 (NRYCYICHSLRYDKLFNLK). Residues 140 to 160 (NTCCYICLTWTLTVVAIVPNF) traverse the membrane as a helical segment. The Extracellular portion of the chain corresponds to 161 to 184 (FVGSLQYDPRIYSCTFAQTVSTSY). The helical transmembrane segment at 185-205 (TITVVVVHFIVPLSIVTFCYL) threads the bilayer. The Cytoplasmic portion of the chain corresponds to 206-237 (RIWILVIQVKHRVRQDCKQKIRAADIRNFLTM). The helical transmembrane segment at 238 to 258 (FVVFVLFAVCWGPLNFIGLAV) threads the bilayer. The Extracellular portion of the chain corresponds to 259-271 (SINPSKVQPHIPE). The helical transmembrane segment at 272–292 (WLFVLSYFMAYFNSCLNAVIY) threads the bilayer. Residues 293–346 (GLLNQNFRKEYKRILLMLRTPRLLFIDVSKGGTEGLKSKPSPAVTNNNQAEIHL) are Cytoplasmic-facing. The disordered stretch occupies residues 326–346 (EGLKSKPSPAVTNNNQAEIHL). The segment covering 335–346 (AVTNNNQAEIHL) has biased composition (polar residues).

Belongs to the G-protein coupled receptor 1 family. Expressed in optic tectum, neostriatum, hypothalamus, thalamus and pineal gland, less in cerebellum and retina.

It is found in the cell membrane. In terms of biological role, high affinity receptor for melatonin. The activity of this receptor is mediated by pertussis toxin sensitive G proteins that inhibits adenylate cyclase activity. The chain is Melatonin receptor type 1C from Gallus gallus (Chicken).